The following is a 449-amino-acid chain: Trigger factor (449 aa).

One can recognise a PPIase FKBP-type domain in the interval Gly-169–Leu-254.

Belongs to the FKBP-type PPIase family. Tig subfamily.

It is found in the cytoplasm. It carries out the reaction [protein]-peptidylproline (omega=180) = [protein]-peptidylproline (omega=0). Its function is as follows. Involved in protein export. Acts as a chaperone by maintaining the newly synthesized protein in an open conformation. Functions as a peptidyl-prolyl cis-trans isomerase. This chain is Trigger factor, found in Azorhizobium caulinodans (strain ATCC 43989 / DSM 5975 / JCM 20966 / LMG 6465 / NBRC 14845 / NCIMB 13405 / ORS 571).